We begin with the raw amino-acid sequence, 135 residues long: HTH-type transcriptional regulator DicA (135 aa).

An HTH cro/C1-type domain is found at 12–66 (IRYRRKNLKHTQRSLAKALKISHVSVSQWERGDSEPTGKNLFALSKVLQCSPTWI). Positions 23 to 42 (QRSLAKALKISHVSVSQWER) form a DNA-binding region, H-T-H motif.

Its function is as follows. This protein is a repressor of division inhibition gene dicB. This chain is HTH-type transcriptional regulator DicA (dicA), found in Escherichia coli (strain K12).